We begin with the raw amino-acid sequence, 305 residues long: Serine/threonine-protein phosphatase ppe1 (305 aa).

The Mn(2+) site is built by Asp-51, His-53, Asp-79, and Asn-111. The active-site Proton donor is His-112. His-161 and His-235 together coordinate Mn(2+).

Belongs to the PPP phosphatase family. PP-6 (PP-V) subfamily. As to quaternary structure, interacts with sts5, ekc1 and mis12. Requires Mn(2+) as cofactor.

It is found in the nucleus. The enzyme catalyses O-phospho-L-seryl-[protein] + H2O = L-seryl-[protein] + phosphate. It catalyses the reaction O-phospho-L-threonyl-[protein] + H2O = L-threonyl-[protein] + phosphate. Has a role in chromosome segregation. May provide a dynamic connection between kinetochore microtubules and kinetochore chromatin. Negatively regulates mis12. This chain is Serine/threonine-protein phosphatase ppe1 (ppe1), found in Schizosaccharomyces pombe (strain 972 / ATCC 24843) (Fission yeast).